Consider the following 231-residue polypeptide: Putative S-adenosylmethionine-dependent methyltransferase RcsF (231 aa).

The TsaA-like domain maps to 5–142 (VSPIGYIRSC…YVPYADAVAD (138 aa)). S-adenosyl-L-methionine is bound by residues 22–24 (PRQ), 63–64 (HQ), Arg91, and 122–125 (LDGT).

The protein belongs to the tRNA methyltransferase O family.

The sequence is that of Putative S-adenosylmethionine-dependent methyltransferase RcsF (rcsF) from Pseudomonas aeruginosa (strain ATCC 15692 / DSM 22644 / CIP 104116 / JCM 14847 / LMG 12228 / 1C / PRS 101 / PAO1).